A 150-amino-acid chain; its full sequence is MTKAFDSALRLLTRREYSAMELCDKLKQKGFSTNDVQNALYECQRLGYQSDVRFVENYIRVRIHQGYGPLKIRQELKNKGIDPDLIQSVLHQEKDNWVNYALRAWEKKFKRQDDFSYSEIQKQQRFLLYRGFDRDVISKVFKEVKSSYLI.

The protein belongs to the RecX family.

It is found in the cytoplasm. In terms of biological role, modulates RecA activity. This is Regulatory protein RecX from Legionella pneumophila (strain Corby).